A 619-amino-acid polypeptide reads, in one-letter code: MEQLSIQTDELQDQFSNCSPASVDSSYSSCSSVEDEIEIYTRLVRNEEPLRRDFFREMSKNSSCSSSFDYGEFGPSSSSRKGSKTTDADLDSLFHSLVETSDQVNTVPKPTKTEVESIPEEFEQKPSSSSHRLPSEMNASITHIKSELDPTMQAFQMPHNDLFLATAAPHYNPFALSNDFMPNPLMPSFTSPFYPQHFPVSDSRRGSQGTTSSSNNTGGTPSPHSSSLPTSPPQLQGFLRSFLNPDNLSTPTSFGVPSETALDADKMCAVCNDRAVCLHYGARTCEGCKGFFKRTVQKNSKYTCAGNKTCPIDKRYRSRCQYCRYQKCLEVGMVKEIVRHGSLSGRRGRLSSKTKLARSEDQPSPPLPLLALMGKAIEDHTNMTVVRQFMQPFDETIALRILHGELHATKKLLMAMPQISEIQPADFQILLSRSFFAIMAIRVANRCGNSTDTIMFESGELFSLNAFPACFQQIIRFMVDKARTFSSLVDWEPQAFAAFIALQFLAGNTEHNVLGLTNKPLVDQVQSTIINALKDHCSGSQNKLAKIVRLTQEFDVFHALGLQALDILYPSHQLPEEFMFLINLTRAPLRSTDAPPACGSPVAPSGSSLFNFQMGPAAF.

Residues 1–18 are compositionally biased toward polar residues; the sequence is MEQLSIQTDELQDQFSNC. Disordered regions lie at residues 1–29, 58–86, 103–134, and 196–232; these read MEQLSIQTDELQDQFSNCSPASVDSSYSS, MSKNSSCSSSFDYGEFGPSSSSRKGSKTT, QVNTVPKPTKTEVESIPEEFEQKPSSSSHRLP, and QHFPVSDSRRGSQGTTSSSNNTGGTPSPHSSSLPTSP. Positions 19 to 29 are enriched in low complexity; that stretch reads SPASVDSSYSS. The segment covering 125-134 has biased composition (polar residues); sequence KPSSSSHRLP. A compositionally biased stretch (low complexity) spans 206-232; that stretch reads GSQGTTSSSNNTGGTPSPHSSSLPTSP. Positions 265–340 form a DNA-binding region, nuclear receptor; sequence DKMCAVCNDR…VGMVKEIVRH (76 aa). NR C4-type zinc fingers lie at residues 268-288 and 304-328; these read CAVCNDRAVCLHYGARTCEGC and CAGNKTCPIDKRYRSRCQYCRYQKC. Residues 345 to 365 are disordered; the sequence is GRRGRLSSKTKLARSEDQPSP. Over residues 346–356 the composition is skewed to basic residues; it reads RRGRLSSKTKL. An NR LBD domain is found at 365–600; that stretch reads PPLPLLALMG…STDAPPACGS (236 aa). Positions 589–600 are AF-2; the sequence is LRSTDAPPACGS.

Belongs to the nuclear hormone receptor family. NR4 subfamily. In hermaphrodites, expressed in the developing spermatheca and dorsal uterus. Expression includes the 8 cells of the dorsal somatic gonad primordium and the sujc cells that form the core of the spermatheca-uterine valve. Expressed in the precursor cells of the spermatheca-sheath lineages (SS cells) and in the precursors and descendents of the dorsal-uterine lineage (DU cells). In both hermaphroditic and male animals, expressed in a pair of head chemosensory neurons.

It localises to the nucleus. Functionally, transcriptional activator that induces gene expression by binding to the NGFI-B response element (NBRE) 5'-AAAGGTCA-3'. Required for proper morphogenesis of the spermatheca and the spermatheca-uterine valve formation. Promotes cell proliferation and differentiation of the spermatheca precursor cells during spermatheca development in larval stage L4. Might play a role in promoting G1/S phase progression in the spermatheca precursor cell lineage. Also required for the differentiation of the spermatheca-uterine junction core (sujc) cells which are generating the spermatheca-uterine valve. The sequence is that of Nuclear hormone receptor family member nhr-6 (nhr-6) from Caenorhabditis elegans.